The chain runs to 332 residues: DNA-directed RNA polymerase subunit alpha (332 aa).

The segment at 1–244 (MKKHAKVYYS…AHLNLLADVE (244 aa)) is alpha N-terminal domain (alpha-NTD). An alpha C-terminal domain (alpha-CTD) region spans residues 259–332 (IKEEPIRRFS…NYKNENKGEN (74 aa)).

Belongs to the RNA polymerase alpha chain family. As to quaternary structure, homodimer. The RNAP catalytic core consists of 2 alpha, 1 beta, 1 beta' and 1 omega subunit. When a sigma factor is associated with the core the holoenzyme is formed, which can initiate transcription.

The catalysed reaction is RNA(n) + a ribonucleoside 5'-triphosphate = RNA(n+1) + diphosphate. Functionally, DNA-dependent RNA polymerase catalyzes the transcription of DNA into RNA using the four ribonucleoside triphosphates as substrates. The protein is DNA-directed RNA polymerase subunit alpha of Mesomycoplasma hyopneumoniae (strain 232) (Mycoplasma hyopneumoniae).